The sequence spans 745 residues: Phosphate transporter PHO1 homolog 4 (745 aa).

Positions 1–290 constitute an SPX domain; the sequence is MRFGKEFVSQ…KRNAAKLYME (290 aa). At 1-342 the chain is on the cytoplasmic side; the sequence is MRFGKEFVSQ…KINKERHLIT (342 aa). A helical transmembrane segment spans residues 343–363; that stretch reads FSTGFFFGCGISLIVALGLII. The Extracellular portion of the chain corresponds to 364–383; the sequence is HARNIMGTPGQRTYMETMFP. Residues 384 to 404 form a helical membrane-spanning segment; that stretch reads LYRFFGFVVLHMDVYAANIYF. Over 405–427 the chain is Cytoplasmic; it reads WRRYRVNYSFIFGFKQGTELGYR. Residues 428 to 448 traverse the membrane as a helical segment; the sequence is HVLLLSFGLGTLSLCAVLLNL. Residues 449-464 are Extracellular-facing; that stretch reads DMEMDAQTKDYRLVTE. Residues 465 to 485 form a helical membrane-spanning segment; that stretch reads LIPLFLLVLVIIIVLCPFNIL. At 486–615 the chain is on the cytoplasmic side; sequence YRSSRFFFLS…YTLNRGSNWN (130 aa). The EXS domain occupies 550-744; that stretch reads TSNIGFRTFY…NYEEDGDHHN (195 aa). Residues 616-636 form a helical membrane-spanning segment; that stretch reads ITAWVFSGVATFYGTYWDIVL. Over 637–660 the chain is Extracellular; sequence DWGLLQRGCKNSFLRDKLLVPHKT. Residues 661 to 681 form a helical membrane-spanning segment; sequence VYYAAMVLNVLLRLVWLQTVL. Residues 682 to 745 lie on the Cytoplasmic side of the membrane; it reads DLKFSFLHRE…YEEDGDHHNN (64 aa).

The protein belongs to the SYG1 (TC 2.A.94) family. As to expression, expressed in root epidermis and cortex, leaf hydathodes, pollen grains and stigma apex.

The protein localises to the cell membrane. May transport inorganic phosphate (Pi). The polypeptide is Phosphate transporter PHO1 homolog 4 (PHO1-H4) (Arabidopsis thaliana (Mouse-ear cress)).